Here is a 406-residue protein sequence, read N- to C-terminus: MDLRRWFPTLYTQSKDSPVRSRDATLYLLRCVFLMGVRKPPAKFFVAYVLWSFALNFCSTFYQPIGFLTGYISHLSEFSPGEFLTSLQVAFNAWSCSTKVLIVWALVKRFDEANNLLDEMDRRITDPGERLQIHRAVSLSNRIFFFFMAVYMVYATNTFLSAIFIGRPPYQNYYPFLDWRSSTLHLALQAGLEYFAMAGACFQDVCVDCYPVNFVLVLRAHMSIFAERLRRLGTYPYESQEQKYERLVQCIQDHKVILRFVDCLRPVISGTIFVQFLVVGLVLGFTLINIVLFANLGSAIAALSFMAAVLLETTPFCILCNYLTEDCYKLADALFQSNWIDEEKRYQKTLMYFLQKLQQPITFMAMNVFPISVGTNISVTKFSFSVFTLVKQMNISEKLAKSEMEE.

Topologically, residues 1 to 44 (MDLRRWFPTLYTQSKDSPVRSRDATLYLLRCVFLMGVRKPPAKF) are cytoplasmic. Residues 45–65 (FVAYVLWSFALNFCSTFYQPI) traverse the membrane as a helical segment. Topologically, residues 66–86 (GFLTGYISHLSEFSPGEFLTS) are extracellular. Residues 87–107 (LQVAFNAWSCSTKVLIVWALV) form a helical membrane-spanning segment. Residues 108–142 (KRFDEANNLLDEMDRRITDPGERLQIHRAVSLSNR) are Cytoplasmic-facing. A helical membrane pass occupies residues 143 to 163 (IFFFFMAVYMVYATNTFLSAI). The Extracellular portion of the chain corresponds to 164 to 181 (FIGRPPYQNYYPFLDWRS). Residues 182 to 202 (STLHLALQAGLEYFAMAGACF) traverse the membrane as a helical segment. Topologically, residues 203–271 (QDVCVDCYPV…DCLRPVISGT (69 aa)) are cytoplasmic. The helical transmembrane segment at 272 to 292 (IFVQFLVVGLVLGFTLINIVL) threads the bilayer. Residues 293–298 (FANLGS) are Extracellular-facing. A helical membrane pass occupies residues 299–319 (AIAALSFMAAVLLETTPFCIL). Residues 320 to 359 (CNYLTEDCYKLADALFQSNWIDEEKRYQKTLMYFLQKLQQ) are Cytoplasmic-facing. A helical membrane pass occupies residues 360–380 (PITFMAMNVFPISVGTNISVT). Topologically, residues 381–406 (KFSFSVFTLVKQMNISEKLAKSEMEE) are extracellular. Asn-394 carries an N-linked (GlcNAc...) asparagine glycan.

Belongs to the insect chemoreceptor superfamily. Heteromeric odorant receptor channel (TC 1.A.69) family. Or2a subfamily. As to quaternary structure, interacts with Orco. Complexes exist early in the endomembrane system in olfactory sensory neurons (OSNs), coupling these complexes to the conserved ciliary trafficking pathway.

It is found in the cell membrane. Functionally, odorant receptor which mediates acceptance or avoidance behavior, depending on its substrates. The odorant receptor repertoire encodes a large collection of odor stimuli that vary widely in identity, intensity, and duration. May form a complex with Orco to form odorant-sensing units, providing sensitive and prolonged odorant signaling and calcium permeability. Involved in the behavioral responses to butanol, ethyl acetate, propyl acetate, and pentyl acetate. Also responds to pyrazines. This Drosophila melanogaster (Fruit fly) protein is Odorant receptor 42a (Or42a).